The chain runs to 312 residues: ADP-L-glycero-D-manno-heptose-6-epimerase (312 aa).

Residues 10 to 11, 31 to 32, K38, K53, 75 to 79, and N92 contribute to the NADP(+) site; these read FI, DN, and EGACS. Residue Y140 is the Proton acceptor of the active site. Residue K144 coordinates NADP(+). N169 serves as a coordination point for substrate. Residues V170 and K178 each contribute to the NADP(+) site. K178 acts as the Proton acceptor in catalysis. Residues S180, H187, 201–204, R209, and Y274 each bind substrate; that span reads FAGS.

Belongs to the NAD(P)-dependent epimerase/dehydratase family. HldD subfamily. As to quaternary structure, homopentamer. NADP(+) serves as cofactor.

It carries out the reaction ADP-D-glycero-beta-D-manno-heptose = ADP-L-glycero-beta-D-manno-heptose. The protein operates within nucleotide-sugar biosynthesis; ADP-L-glycero-beta-D-manno-heptose biosynthesis; ADP-L-glycero-beta-D-manno-heptose from D-glycero-beta-D-manno-heptose 7-phosphate: step 4/4. Its pathway is bacterial outer membrane biogenesis; LPS core biosynthesis. Catalyzes the interconversion between ADP-D-glycero-beta-D-manno-heptose and ADP-L-glycero-beta-D-manno-heptose via an epimerization at carbon 6 of the heptose. The chain is ADP-L-glycero-D-manno-heptose-6-epimerase from Photorhabdus laumondii subsp. laumondii (strain DSM 15139 / CIP 105565 / TT01) (Photorhabdus luminescens subsp. laumondii).